The sequence spans 569 residues: 2-succinyl-5-enolpyruvyl-6-hydroxy-3-cyclohexene-1-carboxylate synthase (569 aa).

The protein belongs to the TPP enzyme family. MenD subfamily. As to quaternary structure, homodimer. Mg(2+) is required as a cofactor. It depends on Mn(2+) as a cofactor. Requires thiamine diphosphate as cofactor.

The catalysed reaction is isochorismate + 2-oxoglutarate + H(+) = 5-enolpyruvoyl-6-hydroxy-2-succinyl-cyclohex-3-ene-1-carboxylate + CO2. Its pathway is quinol/quinone metabolism; 1,4-dihydroxy-2-naphthoate biosynthesis; 1,4-dihydroxy-2-naphthoate from chorismate: step 2/7. The protein operates within quinol/quinone metabolism; menaquinone biosynthesis. Catalyzes the thiamine diphosphate-dependent decarboxylation of 2-oxoglutarate and the subsequent addition of the resulting succinic semialdehyde-thiamine pyrophosphate anion to isochorismate to yield 2-succinyl-5-enolpyruvyl-6-hydroxy-3-cyclohexene-1-carboxylate (SEPHCHC). The protein is 2-succinyl-5-enolpyruvyl-6-hydroxy-3-cyclohexene-1-carboxylate synthase of Paenarthrobacter aurescens (strain TC1).